Here is a 223-residue protein sequence, read N- to C-terminus: Cytidylate kinase (223 aa).

ATP is bound at residue 17–25 (GPTASGKGT).

The protein belongs to the cytidylate kinase family. Type 1 subfamily.

It is found in the cytoplasm. The catalysed reaction is CMP + ATP = CDP + ADP. It catalyses the reaction dCMP + ATP = dCDP + ADP. The chain is Cytidylate kinase from Bordetella bronchiseptica (strain ATCC BAA-588 / NCTC 13252 / RB50) (Alcaligenes bronchisepticus).